Here is a 362-residue protein sequence, read N- to C-terminus: tRNA/tmRNA (uracil-C(5))-methyltransferase (362 aa).

Q182, Y210, N215, E231, and D293 together coordinate S-adenosyl-L-methionine. The active-site Nucleophile is C318. E352 acts as the Proton acceptor in catalysis.

It belongs to the class I-like SAM-binding methyltransferase superfamily. RNA M5U methyltransferase family. TrmA subfamily.

It carries out the reaction uridine(54) in tRNA + S-adenosyl-L-methionine = 5-methyluridine(54) in tRNA + S-adenosyl-L-homocysteine + H(+). The catalysed reaction is uridine(341) in tmRNA + S-adenosyl-L-methionine = 5-methyluridine(341) in tmRNA + S-adenosyl-L-homocysteine + H(+). Its function is as follows. Dual-specificity methyltransferase that catalyzes the formation of 5-methyluridine at position 54 (m5U54) in all tRNAs, and that of position 341 (m5U341) in tmRNA (transfer-mRNA). This is tRNA/tmRNA (uracil-C(5))-methyltransferase from Neisseria meningitidis serogroup B (strain ATCC BAA-335 / MC58).